The following is a 709-amino-acid chain: Dual specificity calcium/calmodulin-dependent 3',5'-cyclic nucleotide phosphodiesterase 1C (709 aa).

N-acetylmethionine is present on Met-1. Residues 123 to 146 (EKPRFKSIVHAVQAGIFVERMYRR) are calmodulin-binding. The 378-residue stretch at 151–528 (VGLSYPPAVI…ERWRAKVPKE (378 aa)) folds into the PDEase domain. The Proton donor role is filled by His-228. Residues His-232, His-268, Asp-269, and Asp-376 each contribute to the Zn(2+) site. Position 269 (Asp-269) interacts with Mg(2+). 2 disordered regions span residues 453-495 (LIDE…APIN) and 523-650 (AKVP…TCRL). Residues 483–495 (VKTSGSEGSAPIN) show a composition bias toward polar residues. The span at 523 to 556 (AKVPKEEKAKKEAEEKARLAAEEQQKEMEAKSQA) shows a compositional bias: basic and acidic residues. Residues 571–581 (ETKNQVNGTRA) are compositionally biased toward polar residues. Composition is skewed to basic and acidic residues over residues 582–598 (NKSDNPRGKNSKAEKSS) and 606–633 (DFKDGKNKTDKKDHSNIGNDSKKTDGTK).

This sequence belongs to the cyclic nucleotide phosphodiesterase family. PDE1 subfamily. As to quaternary structure, homodimer. Zn(2+) is required as a cofactor. The cofactor is Mg(2+). Isoform PDE1C2 is present in the heart and brain and, at lower levels in the lung, liver, kidney and skeletal muscle. Isoform PDE1C1 is expressed in the heart and brain and, at lower levels in lung. Also expressed at low levels in uterus and testis.

The protein localises to the lysosome. The enzyme catalyses a nucleoside 3',5'-cyclic phosphate + H2O = a nucleoside 5'-phosphate + H(+). It catalyses the reaction 3',5'-cyclic GMP + H2O = GMP + H(+). It carries out the reaction 3',5'-cyclic AMP + H2O = AMP + H(+). Its activity is regulated as follows. Type I PDE are activated by the binding of calmodulin in the presence of Ca(2+). Its function is as follows. Calmodulin-dependent cyclic nucleotide phosphodiesterase with a dual specificity for the second messengers cAMP and cGMP, which are key regulators of many important physiological processes. Has a high affinity for both cAMP and cGMP. Modulates the amplitude and duration of the cAMP signal in sensory cilia in response to odorant stimulation, hence contributing to the generation of action potentials. Regulates smooth muscle cell proliferation. Regulates the stability of growth factor receptors, including PDGFRB. The chain is Dual specificity calcium/calmodulin-dependent 3',5'-cyclic nucleotide phosphodiesterase 1C from Homo sapiens (Human).